Reading from the N-terminus, the 144-residue chain is Large ribosomal subunit protein uL15 (144 aa).

The span at 1-14 shows a compositional bias: basic residues; sequence MVVRREKKSRKMRG. The tract at residues 1–35 is disordered; that stretch reads MVVRREKKSRKMRGSRTMGWGIRGQHRDRGSQGGR.

It belongs to the universal ribosomal protein uL15 family. Part of the 50S ribosomal subunit.

In terms of biological role, binds to the 23S rRNA. The polypeptide is Large ribosomal subunit protein uL15 (Saccharolobus solfataricus (strain ATCC 35092 / DSM 1617 / JCM 11322 / P2) (Sulfolobus solfataricus)).